The primary structure comprises 87 residues: Small ribosomal subunit protein bS20 (87 aa).

It belongs to the bacterial ribosomal protein bS20 family.

Its function is as follows. Binds directly to 16S ribosomal RNA. This Corynebacterium diphtheriae (strain ATCC 700971 / NCTC 13129 / Biotype gravis) protein is Small ribosomal subunit protein bS20.